Consider the following 510-residue polypeptide: ATP synthase subunit alpha (510 aa).

An ATP-binding site is contributed by Gly169–Thr176.

Belongs to the ATPase alpha/beta chains family. F-type ATPases have 2 components, CF(1) - the catalytic core - and CF(0) - the membrane proton channel. CF(1) has five subunits: alpha(3), beta(3), gamma(1), delta(1), epsilon(1). CF(0) has three main subunits: a(1), b(2) and c(9-12). The alpha and beta chains form an alternating ring which encloses part of the gamma chain. CF(1) is attached to CF(0) by a central stalk formed by the gamma and epsilon chains, while a peripheral stalk is formed by the delta and b chains.

The protein resides in the cell inner membrane. The enzyme catalyses ATP + H2O + 4 H(+)(in) = ADP + phosphate + 5 H(+)(out). Functionally, produces ATP from ADP in the presence of a proton gradient across the membrane. The alpha chain is a regulatory subunit. This Afipia carboxidovorans (strain ATCC 49405 / DSM 1227 / KCTC 32145 / OM5) (Oligotropha carboxidovorans) protein is ATP synthase subunit alpha.